The primary structure comprises 529 residues: MSSTVSYWILNSTRNSIATLQGGRRLYSRYVSNRNKLKWRLFSRVPPTLNSSPCGGFTLCKAYRHTSTEEDDFHLQLSPEQINEVLRAGETTHKILDLESRVPNSVLRFESNQLAANSPVEDRRGVASCLQTNGLMFGIFDGHGGHACAQAVSERLFYYVAVSLMSHQTLEHMEGAMESMKPLLPILHWLKHPGDSIYKDVTSVHLDHLRVYWQELLDLHMEMGLSIEEALMYSFQRLDSDISLEIQAPLEDEVTRNLSLQVAFSGATACMAHVDGIHLHVANAGDCRAILGVQEDNGMWSCLPLTRDHNAWNQAELSRLKREHPESEDRTIIMEDRLLGVLIPCRAFGDVQLKWSKELQRSILERGFNTEALNIYQFTPPHYYTPPYLTAEPEVTYHRLRPQDKFLVLASDGLWDMLSNEDVVRLVVGHLAEADWHKTDLAQRPANLGLMQSLLLQRKASGLHEADQNAATRLIRHAIGNNEYGEMEAERLAAMLTLPEDLARMYRDDITVTVVYFNSESIGAYYKGG.

Residues 1–66 constitute a mitochondrion transit peptide; it reads MSSTVSYWIL…FTLCKAYRHT (66 aa). The PPM-type phosphatase domain maps to 106–517; sequence VLRFESNQLA…DDITVTVVYF (412 aa). Residues D141, G142, D412, and D508 each coordinate Mn(2+).

The protein belongs to the PP2C family. Mg(2+) serves as cofactor.

It is found in the mitochondrion. It carries out the reaction O-phospho-L-seryl-[pyruvate dehydrogenase E1 alpha subunit] + H2O = L-seryl-[pyruvate dehydrogenase E1 alpha subunit] + phosphate. In terms of biological role, mitochondrial enzyme that catalyzes the dephosphorylation and concomitant reactivation of the alpha subunit of the E1 component of the pyruvate dehydrogenase complex (PDC), thereby stimulating the conversion of pyruvate into acetyl-CoA. Acts as a crucial regulator of T cell metabolism and function, with a particular focus on T-helper Th17. This chain is [Pyruvate dehydrogenase [acetyl-transferring]]-phosphatase 2, mitochondrial, found in Homo sapiens (Human).